A 608-amino-acid chain; its full sequence is MKWLKQLQSLHTKLVIVYVLLIIIGMQIIGLYFTNNLEKELLDNFKKNITQYAKQLEISIEKVYDEKGSVNAQKDIQNLLSEYANRQEIGEIRFIDKDQIIIATTKQSNRSLINQKANDSSVQKALSLGQSNDHLILKDYGGGKDRVWVYNIPVKVDKKVIGNIYIESKINDVYNQLNNINQIFIVGTAISLLITVILGFFIARTITKPITDMRNQTVEMSRGNYTQRVKIYGNDEIGELALAFNNLSKRVQEAQANTESEKRRLDSVITHMSDGIIATDRRGRIRIVNDMALKMLGMAKEDIIGYYMLSVLSLEDEFKLEEIQENNDSFLLDLNEEEGLIARVNFSTIVQETGFVTGYIAVLHDVTEQQQVERERREFVANVSHELRTPLTSMNSYIEALEEGAWKDEELAPQFLSVTREETERMIRLVNDLLQLSKMDNESDQINKEIIDFNMFINKIINRHEMSAKDTTFIRDIPKKTIFTEFDPDKMTQVFDNVITNAMKYSRGDKRVEFHVKQNPLYNRMTIRIKDNGIGIPINKVDKIFDRFYRVDKARTRKMGGTGLGLAISKEIVEAHNGRIWANSVEGQGTSIFITLPCEVIEDGDWDE.

2 helical membrane passes run 14-34 (LVIV…LYFT) and 183-203 (IFIV…FFIA). An HAMP domain is found at 204–256 (RTITKPITDMRNQTVEMSRGNYTQRVKIYGNDEIGELALAFNNLSKRVQEAQA). The 71-residue stretch at 261 to 331 (EKRRLDSVIT…EIQENNDSFL (71 aa)) folds into the PAS domain. Zn(2+) contacts are provided by His271, Asp274, His364, and Glu368. Residues 314 to 378 (LEDEFKLEEI…QQQVERERRE (65 aa)) form the PAC domain. The 219-residue stretch at 382 to 600 (NVSHELRTPL…SIFITLPCEV (219 aa)) folds into the Histidine kinase domain. His385 is subject to Phosphohistidine; by autocatalysis.

In terms of assembly, forms homodimers. Forms homooligomers. Autophosphorylated.

The protein localises to the cell membrane. It catalyses the reaction ATP + protein L-histidine = ADP + protein N-phospho-L-histidine.. With respect to regulation, by zinc. Zinc-binding negatively regulates WalK kinase activity and thus autophosphorylation. Its function is as follows. Member of the two-component regulatory system WalK/WalR that regulates genes involved in cell wall metabolism, virulence regulation, biofilm production, oxidative stress resistance and antibiotic resistance via direct or indirect regulation of autolysins. Functions as a sensor protein kinase which is autophosphorylated at a histidine residue in the dimerization domain and transfers its phosphate group to the conserved aspartic acid residue in the regulatory domain of WalR. In turn, WalR binds to the upstream promoter regions of the target genes to positively and negatively regulate their expression. The protein is Sensor protein kinase WalK (walK) of Staphylococcus aureus (strain Mu3 / ATCC 700698).